Here is a 333-residue protein sequence, read N- to C-terminus: Ribosomal RNA small subunit methyltransferase H (333 aa).

S-adenosyl-L-methionine-binding positions include 43–45 (GGH), aspartate 62, tyrosine 89, aspartate 110, and glutamine 117. The disordered stretch occupies residues 312-333 (RLRAARRIRTTPTRPSPRRRRP).

Belongs to the methyltransferase superfamily. RsmH family.

The protein localises to the cytoplasm. It carries out the reaction cytidine(1402) in 16S rRNA + S-adenosyl-L-methionine = N(4)-methylcytidine(1402) in 16S rRNA + S-adenosyl-L-homocysteine + H(+). Specifically methylates the N4 position of cytidine in position 1402 (C1402) of 16S rRNA. The polypeptide is Ribosomal RNA small subunit methyltransferase H (Beutenbergia cavernae (strain ATCC BAA-8 / DSM 12333 / CCUG 43141 / JCM 11478 / NBRC 16432 / NCIMB 13614 / HKI 0122)).